Reading from the N-terminus, the 172-residue chain is Transcriptional regulator CdrL (172 aa).

Residues 72 to 113 (SPSAVEEVRTTPASGGRADAEEPGDDGETDAEHADTSATGDE) form a disordered region. The DZANK-type zinc-finger motif lies at 116–160 (CSQCGAELSADHVYCPNCGGKATHRVFCECGDEIRADWAFCPRCG).

This sequence belongs to the CdrL family.

The protein localises to the cytoplasm. Its function is as follows. Transcriptional regulator involved in the control of cell division. This Halobacterium salinarum (strain ATCC 29341 / DSM 671 / R1) protein is Transcriptional regulator CdrL.